Reading from the N-terminus, the 469-residue chain is Adenosylhomocysteinase (469 aa).

3 residues coordinate substrate: Thr63, Asp139, and Glu164. Residue 165–167 (TTT) participates in NAD(+) binding. Lys194 and Asp198 together coordinate substrate. NAD(+)-binding positions include Asn199, 228 to 233 (GYGDVG), Glu251, Asn300, 321 to 323 (IGH), and Asn375.

Belongs to the adenosylhomocysteinase family. It depends on NAD(+) as a cofactor.

Its subcellular location is the cytoplasm. It carries out the reaction S-adenosyl-L-homocysteine + H2O = L-homocysteine + adenosine. It participates in amino-acid biosynthesis; L-homocysteine biosynthesis; L-homocysteine from S-adenosyl-L-homocysteine: step 1/1. Functionally, may play a key role in the regulation of the intracellular concentration of adenosylhomocysteine. In Pseudomonas fluorescens (strain SBW25), this protein is Adenosylhomocysteinase.